The sequence spans 555 residues: Urocanate hydratase (555 aa).

Residues 51 to 52 (GG), glutamine 129, 175 to 177 (GMG), glutamate 195, arginine 200, 241 to 242 (NA), 262 to 266 (QTSAH), 272 to 273 (YL), and tyrosine 321 contribute to the NAD(+) site. Cysteine 409 is an active-site residue. Glycine 491 provides a ligand contact to NAD(+).

It belongs to the urocanase family. Requires NAD(+) as cofactor.

The protein localises to the cytoplasm. The enzyme catalyses 4-imidazolone-5-propanoate = trans-urocanate + H2O. The protein operates within amino-acid degradation; L-histidine degradation into L-glutamate; N-formimidoyl-L-glutamate from L-histidine: step 2/3. Functionally, catalyzes the conversion of urocanate to 4-imidazolone-5-propionate. In Rhizorhabdus wittichii (strain DSM 6014 / CCUG 31198 / JCM 15750 / NBRC 105917 / EY 4224 / RW1) (Sphingomonas wittichii), this protein is Urocanate hydratase.